Reading from the N-terminus, the 276-residue chain is MSASVIKSWADAEDEIPTPEITTNPDGTKTVVSYRLNANGQKVKITQKIKEVKVKEKVHPLIAQRKNWAKYGKEKNTPPGPDTRTTQLGEKVELKLGTSWKEIEKQEEESKEEQKAQLVSTQRIKCRTCGGDHFTSKCPFKDTLISDSTDASNAATPEPADDGMNAPGKYVPRHLRKDANGNMPAKDLKDRDDSTTLKISQLNSIVDEDMLRNELLGRYGPFQRAIVVRNRETGESRGFAYVTFATESKAEEALNDLNGKGYHSLILHLEWSKKRK.

A Phosphoserine modification is found at Ser148. One can recognise an RRM domain in the interval 195–274 (TTLKISQLNS…LILHLEWSKK (80 aa)).

Belongs to the eIF-3 subunit G family. In terms of assembly, component of the eukaryotic translation initiation factor 3 (eIF-3) complex.

Its subcellular location is the cytoplasm. In terms of biological role, RNA-binding component of the eukaryotic translation initiation factor 3 (eIF-3) complex, which is involved in protein synthesis of a specialized repertoire of mRNAs and, together with other initiation factors, stimulates binding of mRNA and methionyl-tRNAi to the 40S ribosome. The eIF-3 complex specifically targets and initiates translation of a subset of mRNAs involved in cell proliferation. This subunit can bind 18S rRNA. This is Eukaryotic translation initiation factor 3 subunit G from Debaryomyces hansenii (strain ATCC 36239 / CBS 767 / BCRC 21394 / JCM 1990 / NBRC 0083 / IGC 2968) (Yeast).